Consider the following 499-residue polypeptide: Glucooligosaccharide oxidase (499 aa).

A signal peptide spans 1–25 (MVRIQELTAALSLASVVQASWIQKR). A disulfide bridge links C31 with C80. In terms of domain architecture, FAD-binding PCMH-type spans 58-230 (VDYDPAAIAI…SEFEFNTFEA (173 aa)). A cross-link (6-(S-cysteinyl)-8alpha-(pros-histidyl)-FAD (His-Cys)) is located at residues 95-155 (HSYGSYGFGG…GNRALSHGTC (61 aa)). Residues Y97, T154, and R270 each coordinate substrate. N330 and N366 each carry an N-linked (GlcNAc...) asparagine glycan. Residues Q378 and Q409 each coordinate substrate. N419 carries an N-linked (GlcNAc...) asparagine glycan. A substrate-binding site is contributed by Y454. Residue Y454 is the Proton acceptor of the active site.

It belongs to the oxygen-dependent FAD-linked oxidoreductase family. FAD is required as a cofactor. The FAD cofactor is bound via a bicovalent 6-S-cysteinyl, 8alpha-N1-histidyl FAD linkage.

It localises to the secreted. It carries out the reaction beta-lactose + O2 = lactobiono-1,5-lactone + H2O2. The enzyme catalyses D-cellobiose + O2 = D-cellobiono-1,5-lactone + H2O2. The catalysed reaction is D-cellotriose + O2 = D-cellotriono-1,5-lactone + H2O2. It catalyses the reaction D-cellotetraose + O2 = D-cellotetraono-1,5-lactone + H2O2. It carries out the reaction D-cellopentaose + O2 = D-cellopentaono-1,5-lactone + H2O2. The enzyme catalyses D-cellohexaose + O2 = D-cellohexaono-1,5-lactone + H2O2. In terms of biological role, catalyzes the selective oxidation of C1 hydroxyl moieties on mono- and disaccharides with concomitant reduction of molecular oxygen to hydrogen peroxide. This results in the formation of the corresponding lactones, which typically undergo spontaneous hydrolysis. Glucooligosaccharide oxidase is able to oxidize the monosaccharide D-glucose as well as the disaccharides maltose, cellobiose, and lactose. In addition, it shows high selectivity for cello- and maltooligosaccharides, indicating that glucooligosaccharide oxidase prefers oligosaccharides with a beta-D-glucosyl unit on the reducing end and additional sugar units linked by alpha- or beta-1,4 glucosidic bonds. This chain is Glucooligosaccharide oxidase (gluO), found in Sarocladium strictum (Black bundle disease fungus).